Reading from the N-terminus, the 316-residue chain is HTH-type transcriptional regulator PecT (316 aa).

The HTH lysR-type domain maps to 11–68 (LDLDLLRTFVAVADLNTFAAAAVAVCRTQSAVSQQMQRLEQLIGKELFARHGRNKLLT). A DNA-binding region (H-T-H motif) is located at residues 28–47 (FAAAAVAVCRTQSAVSQQMQ). Positions 293–316 (LPVSTGTESELREPPTDESLKDIT) are disordered. Basic and acidic residues predominate over residues 301–316 (SELREPPTDESLKDIT).

Belongs to the LysR transcriptional regulatory family.

Its function is as follows. Regulates pectinase gene expression. This chain is HTH-type transcriptional regulator PecT (pecT), found in Dickeya dadantii (strain 3937) (Erwinia chrysanthemi (strain 3937)).